A 601-amino-acid chain; its full sequence is Elongation factor 4 (601 aa).

A tr-type G domain is found at 6 to 188; sequence QCIRNFSIIA…AVVAKVPPPQ (183 aa). Residues 18 to 23 and 135 to 138 contribute to the GTP site; these read DHGKST and NKID.

Belongs to the TRAFAC class translation factor GTPase superfamily. Classic translation factor GTPase family. LepA subfamily.

The protein localises to the cell membrane. The enzyme catalyses GTP + H2O = GDP + phosphate + H(+). Its function is as follows. Required for accurate and efficient protein synthesis under certain stress conditions. May act as a fidelity factor of the translation reaction, by catalyzing a one-codon backward translocation of tRNAs on improperly translocated ribosomes. Back-translocation proceeds from a post-translocation (POST) complex to a pre-translocation (PRE) complex, thus giving elongation factor G a second chance to translocate the tRNAs correctly. Binds to ribosomes in a GTP-dependent manner. The protein is Elongation factor 4 of Desulfitobacterium hafniense (strain DSM 10664 / DCB-2).